The chain runs to 223 residues: Ribonuclease HII (223 aa).

The RNase H type-2 domain occupies 32–223; the sequence is FHIAGVDEVG…LKGRFRDNMS (192 aa). A divalent metal cation-binding residues include D38, E39, and D130.

This sequence belongs to the RNase HII family. Mn(2+) serves as cofactor. The cofactor is Mg(2+).

It is found in the cytoplasm. It catalyses the reaction Endonucleolytic cleavage to 5'-phosphomonoester.. Endonuclease that specifically degrades the RNA of RNA-DNA hybrids. This is Ribonuclease HII from Bartonella quintana (strain Toulouse) (Rochalimaea quintana).